Consider the following 326-residue polypeptide: uncharacterized protein (326 aa).

To B.subtilis XkdQ.

This is an uncharacterized protein from Bacillus subtilis (strain 168).